We begin with the raw amino-acid sequence, 565 residues long: Adenine deaminase 1 (565 aa).

This sequence belongs to the metallo-dependent hydrolases superfamily. Adenine deaminase family. Requires Mn(2+) as cofactor.

The catalysed reaction is adenine + H2O + H(+) = hypoxanthine + NH4(+). This is Adenine deaminase 1 from Rhizobium meliloti (strain 1021) (Ensifer meliloti).